The chain runs to 159 residues: Cyclic pyranopterin monophosphate synthase (159 aa).

Substrate-binding positions include 75-77 and 113-114; these read LCH and ME. The active site involves Asp-128.

It belongs to the MoaC family. As to quaternary structure, homohexamer; trimer of dimers.

It catalyses the reaction (8S)-3',8-cyclo-7,8-dihydroguanosine 5'-triphosphate = cyclic pyranopterin phosphate + diphosphate. Its pathway is cofactor biosynthesis; molybdopterin biosynthesis. Catalyzes the conversion of (8S)-3',8-cyclo-7,8-dihydroguanosine 5'-triphosphate to cyclic pyranopterin monophosphate (cPMP). In Burkholderia multivorans (strain ATCC 17616 / 249), this protein is Cyclic pyranopterin monophosphate synthase.